Consider the following 273-residue polypeptide: Dermonecrotic toxin LdSicTox-alphaIB1avi (273 aa).

The active site involves His5. Mg(2+) contacts are provided by Glu25 and Asp27. His41 (nucleophile) is an active-site residue. 2 cysteine pairs are disulfide-bonded: Cys45/Cys51 and Cys47/Cys190. Residue Asp85 participates in Mg(2+) binding. Asn250 carries N-linked (GlcNAc...) asparagine glycosylation.

It belongs to the arthropod phospholipase D family. Class II subfamily. Mg(2+) serves as cofactor. As to expression, expressed by the venom gland.

It is found in the secreted. It carries out the reaction an N-(acyl)-sphingosylphosphocholine = an N-(acyl)-sphingosyl-1,3-cyclic phosphate + choline. It catalyses the reaction an N-(acyl)-sphingosylphosphoethanolamine = an N-(acyl)-sphingosyl-1,3-cyclic phosphate + ethanolamine. The catalysed reaction is a 1-acyl-sn-glycero-3-phosphocholine = a 1-acyl-sn-glycero-2,3-cyclic phosphate + choline. The enzyme catalyses a 1-acyl-sn-glycero-3-phosphoethanolamine = a 1-acyl-sn-glycero-2,3-cyclic phosphate + ethanolamine. Its function is as follows. Dermonecrotic toxins cleave the phosphodiester linkage between the phosphate and headgroup of certain phospholipids (sphingolipid and lysolipid substrates), forming an alcohol (often choline) and a cyclic phosphate. This toxin acts on sphingomyelin (SM). It may also act on ceramide phosphoethanolamine (CPE), lysophosphatidylcholine (LPC) and lysophosphatidylethanolamine (LPE), but not on lysophosphatidylserine (LPS), and lysophosphatidylglycerol (LPG). It acts by transphosphatidylation, releasing exclusively cyclic phosphate products as second products. Induces dermonecrosis, hemolysis, increased vascular permeability, edema, inflammatory response, and platelet aggregation. In Loxosceles deserta (Desert recluse spider), this protein is Dermonecrotic toxin LdSicTox-alphaIB1avi.